The chain runs to 593 residues: UvrABC system protein C (593 aa).

The GIY-YIG domain maps to 13 to 91 (TTPGVYMMKD…IKEYRPKYNV (79 aa)). One can recognise a UVR domain in the interval 202–237 (DEIVEELKKKMFEYADNLMFEKAQEIKNKITSLEQI).

This sequence belongs to the UvrC family. Interacts with UvrB in an incision complex.

It is found in the cytoplasm. Functionally, the UvrABC repair system catalyzes the recognition and processing of DNA lesions. UvrC both incises the 5' and 3' sides of the lesion. The N-terminal half is responsible for the 3' incision and the C-terminal half is responsible for the 5' incision. The polypeptide is UvrABC system protein C (Caldicellulosiruptor saccharolyticus (strain ATCC 43494 / DSM 8903 / Tp8T 6331)).